The primary structure comprises 712 residues: DNA ligase (712 aa).

The tract at residues 1–22 (MVQKNEHQGGQSQHSLFAAGPT) is disordered. NAD(+) is bound by residues 53–57 (DDQFD) and Asp-138. Lys-140 acts as the N6-AMP-lysine intermediate in catalysis. Positions 161, 199, 318, and 342 each coordinate NAD(+). The Zn(2+) site is built by Cys-436, Cys-439, Cys-454, and Cys-459. Positions 612 to 631 (RGGRSGGGSSGSTGEGGLAS) are disordered. The segment covering 614 to 630 (GRSGGGSSGSTGEGGLA) has biased composition (gly residues). One can recognise a BRCT domain in the interval 629-712 (LASGPLAGKN…MLREAKAASE (84 aa)).

This sequence belongs to the NAD-dependent DNA ligase family. LigA subfamily. The cofactor is Mg(2+). Mn(2+) is required as a cofactor.

The catalysed reaction is NAD(+) + (deoxyribonucleotide)n-3'-hydroxyl + 5'-phospho-(deoxyribonucleotide)m = (deoxyribonucleotide)n+m + AMP + beta-nicotinamide D-nucleotide.. Functionally, DNA ligase that catalyzes the formation of phosphodiester linkages between 5'-phosphoryl and 3'-hydroxyl groups in double-stranded DNA using NAD as a coenzyme and as the energy source for the reaction. It is essential for DNA replication and repair of damaged DNA. This Desulfovibrio desulfuricans (strain ATCC 27774 / DSM 6949 / MB) protein is DNA ligase.